Reading from the N-terminus, the 177-residue chain is Adenine phosphoribosyltransferase (177 aa).

It belongs to the purine/pyrimidine phosphoribosyltransferase family. Homodimer.

It is found in the cytoplasm. It carries out the reaction AMP + diphosphate = 5-phospho-alpha-D-ribose 1-diphosphate + adenine. The protein operates within purine metabolism; AMP biosynthesis via salvage pathway; AMP from adenine: step 1/1. In terms of biological role, catalyzes a salvage reaction resulting in the formation of AMP, that is energically less costly than de novo synthesis. The chain is Adenine phosphoribosyltransferase from Mycoplasma pneumoniae (strain ATCC 29342 / M129 / Subtype 1) (Mycoplasmoides pneumoniae).